We begin with the raw amino-acid sequence, 283 residues long: MITVAVPNKGRLHEPALKLLERAGIGVEEPLGRRLKARTTDPDIEVMFVRAADIPRLVEEGVAQLGITGYDLIVEAGAEVKELLDLRFGRARLVLAVPEESDVKSPEDLDGGTVATEFPNIARQYFEDVGVDVEIIQVSGATEIMPRIGVADAIVDLCSTGTTLKVNRLRVVDELLETSARLIANPDATDGEVIRRVYLSLKGVLNADGKCLVMMNVPRERLEEFHELLPGVTGPTVSEIYGDEDMVEVYAVVNEEDVSEVVLRAKELGAEGIIVLPIERMIP.

It belongs to the ATP phosphoribosyltransferase family. Long subfamily. Mg(2+) is required as a cofactor.

Its subcellular location is the cytoplasm. The catalysed reaction is 1-(5-phospho-beta-D-ribosyl)-ATP + diphosphate = 5-phospho-alpha-D-ribose 1-diphosphate + ATP. It participates in amino-acid biosynthesis; L-histidine biosynthesis; L-histidine from 5-phospho-alpha-D-ribose 1-diphosphate: step 1/9. Feedback inhibited by histidine. In terms of biological role, catalyzes the condensation of ATP and 5-phosphoribose 1-diphosphate to form N'-(5'-phosphoribosyl)-ATP (PR-ATP). Has a crucial role in the pathway because the rate of histidine biosynthesis seems to be controlled primarily by regulation of HisG enzymatic activity. In Methanopyrus kandleri (strain AV19 / DSM 6324 / JCM 9639 / NBRC 100938), this protein is ATP phosphoribosyltransferase.